A 333-amino-acid chain; its full sequence is Glycogenin-1 (333 aa).

The residue at position 2 (T2) is an N-acetylthreonine. Positions 9, 11, 12, and 15 each coordinate UDP. UDP-alpha-D-glucose-binding residues include L9, T11, N12, and Y15. The residue at position 44 (S44) is a Phosphoserine. Residue R77 coordinates UDP. UDP-alpha-D-glucose contacts are provided by R77, K86, D102, A103, D104, N133, S134, D160, D163, and Q164. UDP is bound by residues D102, A103, and D104. D102 serves as a coordination point for Mn(2+). D104 is a Mn(2+) binding site. An O-linked (Glc...) tyrosine glycan is attached at Y195. UDP is bound by residues H212, G215, and K218. H212 is a Mn(2+) binding site. Residues G215 and K218 each coordinate UDP-alpha-D-glucose. Residues 284–316 (SDLSFGEAPAAPQPSMSSEERKERWEQGQADYM) form an interaction with GYS1 region. The segment at 290–316 (EAPAAPQPSMSSEERKERWEQGQADYM) is disordered.

This sequence belongs to the glycosyltransferase 8 family. Glycogenin subfamily. In terms of assembly, part of the GYS1-GYG1 complex, a heterooctamer composed of a tetramer of GYS1 and 2 dimers of GYG1, where each GYS1 protomer binds to one GYG1 subunit (via GYG1 C-terminus); the GYS1 tetramer may dissociate from GYG1 dimers to continue glycogen polymerization on its own. May also form a heterooctamer complex with GYS2. The cofactor is Mn(2+). In terms of processing, self-glycosylated by the transfer of glucose residues from UDP-glucose to itself, forming an alpha-1,4-glycan of around 10 residues attached to Tyr-195. Post-translationally, phosphorylated. In terms of tissue distribution, skeletal muscle, heart, to a lesser extent in kidney, lung and brain.

It localises to the cytoplasm. Its subcellular location is the nucleus. It carries out the reaction L-tyrosyl-[glycogenin] + UDP-alpha-D-glucose = alpha-D-glucosyl-L-tyrosyl-[glycogenin] + UDP + H(+). It catalyses the reaction [1,4-alpha-D-glucosyl](n)-L-tyrosyl-[glycogenin] + UDP-alpha-D-glucose = [1,4-alpha-D-glucosyl](n+1)-L-tyrosyl-[glycogenin] + UDP + H(+). The protein operates within glycan biosynthesis; glycogen biosynthesis. Functionally, glycogenin participates in the glycogen biosynthetic process along with glycogen synthase and glycogen branching enzyme. It catalyzes the formation of a short alpha (1,4)-glucosyl chain covalently attached via a glucose 1-O-tyrosyl linkage to internal tyrosine residues and these chains act as primers for the elongation reaction catalyzed by glycogen synthase. The polypeptide is Glycogenin-1 (Mus musculus (Mouse)).